The chain runs to 321 residues: Auxin-responsive protein IAA8 (321 aa).

The EAR-like (transcriptional repression) signature appears at 54-58; that stretch reads LRLGL. The PB1 domain occupies 199–301; sequence VLFVKVSMDG…TCQKLKIMKG (103 aa).

This sequence belongs to the Aux/IAA family. In terms of assembly, homodimers and heterodimers. Interacts with TPL. Highly expressed in the whole plant.

Its subcellular location is the nucleus. Functionally, aux/IAA proteins are short-lived transcriptional factors that function as repressors of early auxin response genes at low auxin concentrations. Repression is thought to result from the interaction with auxin response factors (ARFs), proteins that bind to the auxin-responsive promoter element (AuxRE). Formation of heterodimers with ARF proteins may alter their ability to modulate early auxin response genes expression. In Arabidopsis thaliana (Mouse-ear cress), this protein is Auxin-responsive protein IAA8 (IAA8).